Consider the following 243-residue polypeptide: 1-(5-phosphoribosyl)-5-[(5-phosphoribosylamino)methylideneamino] imidazole-4-carboxamide isomerase (243 aa).

Asp-8 (proton acceptor) is an active-site residue. Catalysis depends on Asp-129, which acts as the Proton donor.

Belongs to the HisA/HisF family.

Its subcellular location is the cytoplasm. It catalyses the reaction 1-(5-phospho-beta-D-ribosyl)-5-[(5-phospho-beta-D-ribosylamino)methylideneamino]imidazole-4-carboxamide = 5-[(5-phospho-1-deoxy-D-ribulos-1-ylimino)methylamino]-1-(5-phospho-beta-D-ribosyl)imidazole-4-carboxamide. Its pathway is amino-acid biosynthesis; L-histidine biosynthesis; L-histidine from 5-phospho-alpha-D-ribose 1-diphosphate: step 4/9. The chain is 1-(5-phosphoribosyl)-5-[(5-phosphoribosylamino)methylideneamino] imidazole-4-carboxamide isomerase from Parvibaculum lavamentivorans (strain DS-1 / DSM 13023 / NCIMB 13966).